A 556-amino-acid polypeptide reads, in one-letter code: Interleukin-1 receptor-like 1 (556 aa).

The N-terminal stretch at 1–18 (MGFWILAILTILMYSTAA) is a signal peptide. 2 Ig-like C2-type domains span residues 19–103 (KFSK…ANVT) and 114–197 (PDYL…VTAT). The Extracellular portion of the chain corresponds to 19 to 328 (KFSKQSWGLE…SRKNPIDHHS (310 aa)). An intrachain disulfide couples cysteine 36 to cysteine 87. N-linked (GlcNAc...) asparagine glycans are attached at residues asparagine 54, asparagine 95, asparagine 101, asparagine 140, and asparagine 191. 2 disulfides stabilise this stretch: cysteine 111–cysteine 151 and cysteine 133–cysteine 181. Residues 198–211 (RSFTVKDEQGFSLF) form a flexible linker region. The Ig-like C2-type 3 domain maps to 212 to 319 (PVIGAPAQNE…GLRRHTVRLS (108 aa)). N-linked (GlcNAc...) asparagine glycosylation is found at asparagine 232, asparagine 254, and asparagine 273. 2 cysteine pairs are disulfide-bonded: cysteine 235–cysteine 303 and cysteine 238–cysteine 282. Lysine 321 is covalently cross-linked (Glycyl lysine isopeptide (Lys-Gly) (interchain with G-Cter in ubiquitin)). A helical transmembrane segment spans residues 329–349 (IYCIIAVCSVFLMLINVLVII). The Cytoplasmic portion of the chain corresponds to 350 to 556 (LKMFWIEATL…SLTPLAAQKQ (207 aa)). One can recognise a TIR domain in the interval 375–535 (KLYDAYVVYP…KFWKHVRYQM (161 aa)). Glutamate 461 is an active-site residue.

This sequence belongs to the interleukin-1 receptor family. As to quaternary structure, interacts with MYD88, IRAK1, IRAK4, and TRAF6. Bound to its ligand IL-33, interacts with IL1RAP to form the minimal interleukin-33 signaling complex with a 1:1:1 stoichiometry. Interacts with KIT (bound to KITLG/SCF). A mast cell-specific KITLG/SCF-induced interleukin-33 signaling complex contains IL1RL1, IL1RAP, KIT and MYD88. Interacts with TMED1. Post-translationally, ubiquitinated at Lys-321 in a FBXL19-mediated manner; leading to proteasomal degradation. Ubiquitination by TRAF6 via 'Lys-27'-linked polyubiquitination and deubiquitination by USP38 serves as a critical regulatory mechanism for fine-tuning IL1RL1-mediated inflammatory response. As to expression, highly expressed in kidney, lung, placenta, stomach, skeletal muscle, colon and small intestine. Isoform A is prevalently expressed in the lung, testis, placenta, stomach and colon. Isoform B is more abundant in the brain, kidney and the liver. Isoform C is not detected in brain, heart, liver, kidney and skeletal muscle. Expressed on T-cells in fibrotic liver; at protein level. Overexpressed in fibrotic and cirrhotic liver.

It localises to the cell membrane. The protein localises to the secreted. It catalyses the reaction NAD(+) + H2O = ADP-D-ribose + nicotinamide + H(+). Receptor for interleukin-33 (IL-33) which plays crucial roles in innate and adaptive immunity, contributing to tissue homeostasis and responses to environmental stresses together with coreceptor IL1RAP. Its stimulation recruits MYD88, IRAK1, IRAK4, and TRAF6, followed by phosphorylation of MAPK3/ERK1 and/or MAPK1/ERK2, MAPK14, and MAPK8. Possibly involved in helper T-cell function. Upon tissue injury, induces UCP2-dependent mitochondrial rewiring that attenuates the generation of reactive oxygen species and preserves the integrity of Krebs cycle required for persistent production of itaconate and subsequent GATA3-dependent differentiation of inflammation-resolving alternatively activated macrophages. Its function is as follows. Inhibits IL-33 signaling. The protein is Interleukin-1 receptor-like 1 (IL1RL1) of Homo sapiens (Human).